The sequence spans 352 residues: Glycoprotein integral membrane protein 1 (352 aa).

A signal peptide spans 1–25 (MASRCKIHLTVAYLLILCILASAQS). Residues 26-281 (KQMTTETVVL…KLRRFLSDSV (256 aa)) are Extracellular-facing. N-linked (GlcNAc...) asparagine glycosylation is found at asparagine 36, asparagine 44, asparagine 89, asparagine 109, asparagine 151, and asparagine 197. The tract at residues 206-245 (NSETTQEEIAAPGKLPETPLRMDPETLYESREEEERRSDS) is disordered. Positions 225–244 (LRMDPETLYESREEEERRSD) are enriched in basic and acidic residues. Residues 282–302 (PLFFLVMWVVVVGVAGSAVVI) traverse the membrane as a helical segment. At 303–352 (KILDLIFPSCEHRGFFHLNPETLMPDDEKVSLIDNMEGDMTEKSILLIEK) the chain is on the cytoplasmic side.

It localises to the membrane. In Danio rerio (Zebrafish), this protein is Glycoprotein integral membrane protein 1 (ginm1).